The sequence spans 129 residues: Putative pre-16S rRNA nuclease (129 aa).

Belongs to the YqgF nuclease family.

Its subcellular location is the cytoplasm. Could be a nuclease involved in processing of the 5'-end of pre-16S rRNA. This chain is Putative pre-16S rRNA nuclease, found in Campylobacter jejuni subsp. doylei (strain ATCC BAA-1458 / RM4099 / 269.97).